The primary structure comprises 352 residues: Phosphoribosylformylglycinamidine cyclo-ligase (352 aa).

The protein belongs to the AIR synthase family.

Its subcellular location is the cytoplasm. The enzyme catalyses 2-formamido-N(1)-(5-O-phospho-beta-D-ribosyl)acetamidine + ATP = 5-amino-1-(5-phospho-beta-D-ribosyl)imidazole + ADP + phosphate + H(+). It functions in the pathway purine metabolism; IMP biosynthesis via de novo pathway; 5-amino-1-(5-phospho-D-ribosyl)imidazole from N(2)-formyl-N(1)-(5-phospho-D-ribosyl)glycinamide: step 2/2. This Pseudomonas putida (strain GB-1) protein is Phosphoribosylformylglycinamidine cyclo-ligase.